The sequence spans 29 residues: Dermaseptin-S5 (29 aa).

Belongs to the frog skin active peptide (FSAP) family. Dermaseptin subfamily. Expressed by the skin glands.

It localises to the secreted. Its function is as follows. Potent antimicrobial peptide with activity against bacteria and protozoa. Also has activity against fungi. Probably acts by disturbing membrane functions with its amphipathic structure. The sequence is that of Dermaseptin-S5 from Phyllomedusa sauvagei (Sauvage's leaf frog).